The primary structure comprises 137 residues: Fibroblast growth factor 2 (137 aa).

A heparin-binding site is contributed by Asn27. Residue Tyr73 is modified to Phosphotyrosine; by TEC. Lys86 participates in a covalent cross-link: Glycyl lysine isopeptide (Lys-Gly) (interchain with G-Cter in SUMO1). The heparin-binding stretch occupies residues 119–135 (KRTGQYKLGSKTGPGQK).

The protein belongs to the heparin-binding growth factors family. As to quaternary structure, monomer. Homodimer. Interacts with FGFR1, FGFR2, FGFR3 and FGFR4. Affinity between fibroblast growth factors (FGFs) and their receptors is increased by heparan sulfate glycosaminoglycans that function as coreceptors. Interacts with CSPG4, FGFBP1 and TEC. Found in a complex with FGFBP1, FGF1 and FGF2. Interacts with FGFBP3. Interacts with integrin ITGAV:ITGB3; the interaction is required for FGF2 signaling. Interacts with SNORC (via the extracellular domain). Interacts with glypican GPC3. In terms of processing, phosphorylation at Tyr-73 regulates FGF2 unconventional secretion.

It localises to the secreted. It is found in the nucleus. Acts as a ligand for FGFR1, FGFR2, FGFR3 and FGFR4. Also acts as an integrin ligand which is required for FGF2 signaling. Binds to integrin ITGAV:ITGB3. Plays an important role in the regulation of cell survival, cell division, cell differentiation and cell migration. Functions as a potent mitogen in vitro. Can induce angiogenesis. Mediates phosphorylation of ERK1/2 and thereby promotes retinal lens fiber differentiation. The protein is Fibroblast growth factor 2 (FGF2) of Oryctolagus cuniculus (Rabbit).